The following is a 324-amino-acid chain: IDS-like terpene synthase 2 (324 aa).

2 residues coordinate Mg(2+): D77 and D81.

This sequence belongs to the FPP/GGPP synthase family. It depends on Mg(2+) as a cofactor.

It carries out the reaction (2E)-geranyl diphosphate = (E)-beta-ocimene + diphosphate. The catalysed reaction is (2E,6E)-farnesyl diphosphate = (3E,6E)-alpha-farnesene + diphosphate. The enzyme catalyses (2E,6E,10E)-geranylgeranyl diphosphate = (E,E,E)-alpha-springene + diphosphate. Its function is as follows. Terpene synthase that shows monoterpene synthase activity and produces (E)-beta-ocimene as a major product, using geranyl diphosphate (GPP) as substrate. Also shows sesquiterpene synthase activity as it is able to convert farnesyl diphosphate (FPP) into (E,E)-alpha-farnesene. Finally, TPS2 can convert geranylgeranyl diphosphate into (E,E,E)-alpha-springene. This chain is IDS-like terpene synthase 2, found in Melampsora lini (Rust fungus).